Here is a 637-residue protein sequence, read N- to C-terminus: Chaperone protein HtpG (637 aa).

The tract at residues 1-345 (MSQQETHGFQ…SNDLPLNVSR (345 aa)) is a; substrate-binding. A b region spans residues 346 to 562 (EILQDNHITK…EGEMSTQMIK (217 aa)). A c region spans residues 563-637 (LMQAAGQPVP…MNQMLLANMK (75 aa)).

Belongs to the heat shock protein 90 family. As to quaternary structure, homodimer.

It is found in the cytoplasm. In terms of biological role, molecular chaperone. Has ATPase activity. The polypeptide is Chaperone protein HtpG (Shewanella sp. (strain W3-18-1)).